Here is a 637-residue protein sequence, read N- to C-terminus: ATP-dependent RNA helicase DBP6 (637 aa).

Residues 1-93 (MFAVRFDPSQ…AASDHPDKHN (93 aa)) are disordered. The span at 33 to 84 (DEEDESSEEETESSEDEEEKEKEEVADEDSMDVDDESSGDDDEEAEEGEVDA) shows a compositional bias: acidic residues. A Q motif motif is present at residues 198–206 (TFPIQSILL). Residues 222 to 402 (KNFTRRVGDV…GLQFYNPKLF (181 aa)) enclose the Helicase ATP-binding domain. 235 to 242 (ASTGSGKT) contacts ATP. A DEAD box motif is present at residues 342-345 (DEAD). Residues 434-608 (FLLRLLSEIN…EGQEEEAQVL (175 aa)) form the Helicase C-terminal domain.

Belongs to the DEAD box helicase family. DDX51/DBP6 subfamily. Associated with pre-ribosomal particles.

Its subcellular location is the nucleus. The protein localises to the nucleolus. The enzyme catalyses ATP + H2O = ADP + phosphate + H(+). In terms of biological role, ATP-binding RNA helicase involved in the biogenesis of 60S ribosomal subunits and is required for the normal formation of 25S and 5.8S rRNAs. The protein is ATP-dependent RNA helicase DBP6 (DBP6) of Vanderwaltozyma polyspora (strain ATCC 22028 / DSM 70294 / BCRC 21397 / CBS 2163 / NBRC 10782 / NRRL Y-8283 / UCD 57-17) (Kluyveromyces polysporus).